The sequence spans 455 residues: Bifunctional protein GlmU (455 aa).

A pyrophosphorylase region spans residues M1 to R226. UDP-N-acetyl-alpha-D-glucosamine is bound by residues L8–G11, K22, Q73, G78–T79, Y99–D101, G136, E151, N166, and N224. D101 contacts Mg(2+). Mg(2+) is bound at residue N224. The linker stretch occupies residues R227 to Q247. Residues G248–S455 are N-acetyltransferase. Positions 330 and 348 each coordinate UDP-N-acetyl-alpha-D-glucosamine. Catalysis depends on H360, which acts as the Proton acceptor. UDP-N-acetyl-alpha-D-glucosamine is bound by residues Y363 and N374. Acetyl-CoA-binding positions include A377, N383–Y384, S402, A420, and R437.

It in the N-terminal section; belongs to the N-acetylglucosamine-1-phosphate uridyltransferase family. In the C-terminal section; belongs to the transferase hexapeptide repeat family. Homotrimer. It depends on Mg(2+) as a cofactor.

The protein resides in the cytoplasm. It carries out the reaction alpha-D-glucosamine 1-phosphate + acetyl-CoA = N-acetyl-alpha-D-glucosamine 1-phosphate + CoA + H(+). The enzyme catalyses N-acetyl-alpha-D-glucosamine 1-phosphate + UTP + H(+) = UDP-N-acetyl-alpha-D-glucosamine + diphosphate. The protein operates within nucleotide-sugar biosynthesis; UDP-N-acetyl-alpha-D-glucosamine biosynthesis; N-acetyl-alpha-D-glucosamine 1-phosphate from alpha-D-glucosamine 6-phosphate (route II): step 2/2. Its pathway is nucleotide-sugar biosynthesis; UDP-N-acetyl-alpha-D-glucosamine biosynthesis; UDP-N-acetyl-alpha-D-glucosamine from N-acetyl-alpha-D-glucosamine 1-phosphate: step 1/1. It participates in bacterial outer membrane biogenesis; LPS lipid A biosynthesis. Functionally, catalyzes the last two sequential reactions in the de novo biosynthetic pathway for UDP-N-acetylglucosamine (UDP-GlcNAc). The C-terminal domain catalyzes the transfer of acetyl group from acetyl coenzyme A to glucosamine-1-phosphate (GlcN-1-P) to produce N-acetylglucosamine-1-phosphate (GlcNAc-1-P), which is converted into UDP-GlcNAc by the transfer of uridine 5-monophosphate (from uridine 5-triphosphate), a reaction catalyzed by the N-terminal domain. The polypeptide is Bifunctional protein GlmU (Pseudomonas putida (strain GB-1)).